A 429-amino-acid chain; its full sequence is Serine--tRNA ligase (429 aa).

228–230 (TSE) contacts L-serine. 259 to 261 (RAE) serves as a coordination point for ATP. E282 contributes to the L-serine binding site. 346–349 (EISS) provides a ligand contact to ATP. S384 serves as a coordination point for L-serine.

This sequence belongs to the class-II aminoacyl-tRNA synthetase family. Type-1 seryl-tRNA synthetase subfamily. In terms of assembly, homodimer. The tRNA molecule binds across the dimer.

It is found in the cytoplasm. It catalyses the reaction tRNA(Ser) + L-serine + ATP = L-seryl-tRNA(Ser) + AMP + diphosphate + H(+). The enzyme catalyses tRNA(Sec) + L-serine + ATP = L-seryl-tRNA(Sec) + AMP + diphosphate + H(+). The protein operates within aminoacyl-tRNA biosynthesis; selenocysteinyl-tRNA(Sec) biosynthesis; L-seryl-tRNA(Sec) from L-serine and tRNA(Sec): step 1/1. Catalyzes the attachment of serine to tRNA(Ser). Is also able to aminoacylate tRNA(Sec) with serine, to form the misacylated tRNA L-seryl-tRNA(Sec), which will be further converted into selenocysteinyl-tRNA(Sec). The chain is Serine--tRNA ligase from Anaplasma marginale (strain St. Maries).